The chain runs to 298 residues: ADP-ribosyl cyclase/cyclic ADP-ribose hydrolase 1 (298 aa).

At 1–21 (MPDYEFSPASGDRPRSWISKQ) the chain is on the cytoplasmic side. The helical; Signal-anchor for type II membrane protein transmembrane segment at 22 to 42 (VLIVLGVCLPVILALAIWVGV) threads the bilayer. At 43 to 298 (LTWRQSSMGA…PEHPSCSVLM (256 aa)) the chain is on the extracellular side. 3 disulfides stabilise this stretch: C64-C80, C97-C178, and C158-C171. N98 is a glycosylation site (N-linked (GlcNAc...) asparagine). C117 is an active-site residue. Residue N118 is glycosylated (N-linked (GlcNAc...) asparagine). A glycan (N-linked (GlcNAc...) asparagine) is linked at N177. C199 is a catalytic residue. N-linked (GlcNAc...) asparagine glycans are attached at residues N207 and N268. Cystine bridges form between C252–C273 and C285–C294.

The protein belongs to the ADP-ribosyl cyclase family. As to quaternary structure, homodimer. In terms of tissue distribution, osteoclasts.

It localises to the cell membrane. The protein localises to the microsome membrane. It is found in the endoplasmic reticulum membrane. The enzyme catalyses NAD(+) = cyclic ADP-beta-D-ribose + nicotinamide + H(+). It catalyses the reaction 2'-phospho-cyclic ADP-ribose + nicotinate = nicotinate-adenine dinucleotide phosphate. It carries out the reaction NAD(+) + H2O = ADP-D-ribose + nicotinamide + H(+). The catalysed reaction is nicotinate + NADP(+) = nicotinate-adenine dinucleotide phosphate + nicotinamide. Functionally, synthesizes cyclic ADP-ribose (cADPR), a second messenger for glucose-induced insulin secretion. Synthesizes the Ca(2+) mobilizer nicotinate-adenine dinucleotide phosphate, NAADP(+), from 2'-phospho-cADPR and nicotinic acid, as well as from NADP(+) and nicotinic acid. Also has cADPR hydrolase activity. The chain is ADP-ribosyl cyclase/cyclic ADP-ribose hydrolase 1 (CD38) from Oryctolagus cuniculus (Rabbit).